Reading from the N-terminus, the 557-residue chain is Phosphoribosylaminoimidazole carboxylase, chloroplastic (557 aa).

The 186-residue stretch at 108–293 (KVALLPAWIP…QFEQHLPAVV (186 aa)) folds into the ATP-grasp domain. Position 132 to 189 (132 to 189 (WDSLDIHFMIKSRRLAYDGRGNFVAKSEEELSSAVDALGGFDRGLYAEKWAPFVKELA)) interacts with ATP. The tract at residues 387–557 (CSTLLGFIMG…HGWESYLKNS (171 aa)) is AIR carboxylase catalytic subunit.

In the C-terminal section; belongs to the AIR carboxylase family. Class I subfamily.

Its subcellular location is the plastid. The protein localises to the chloroplast. It catalyses the reaction 5-amino-1-(5-phospho-D-ribosyl)imidazole-4-carboxylate + H(+) = 5-amino-1-(5-phospho-beta-D-ribosyl)imidazole + CO2. Its pathway is purine metabolism; IMP biosynthesis via de novo pathway; 5-amino-1-(5-phospho-D-ribosyl)imidazole-4-carboxylate from 5-amino-1-(5-phospho-D-ribosyl)imidazole (carboxylase route): step 1/1. The polypeptide is Phosphoribosylaminoimidazole carboxylase, chloroplastic (PURKE) (Vigna aconitifolia (Moth bean)).